Consider the following 955-residue polypeptide: Protein MEI2-like 3 (955 aa).

Positions Ile-64–Phe-83 are disordered. RRM domains lie at Arg-270–Pro-343 and Gly-355–His-428. Disordered regions lie at residues Arg-436–Thr-465 and Asn-897–Thr-955. The segment covering Asp-935–Thr-955 has biased composition (polar residues).

Its function is as follows. Probable RNA-binding protein that may play a role in growth regulation. In Oryza sativa subsp. japonica (Rice), this protein is Protein MEI2-like 3 (ML3).